We begin with the raw amino-acid sequence, 156 residues long: Small ribosomal subunit protein uS7 (156 aa).

It belongs to the universal ribosomal protein uS7 family. Part of the 30S ribosomal subunit. Contacts proteins S9 and S11.

Functionally, one of the primary rRNA binding proteins, it binds directly to 16S rRNA where it nucleates assembly of the head domain of the 30S subunit. Is located at the subunit interface close to the decoding center, probably blocks exit of the E-site tRNA. This chain is Small ribosomal subunit protein uS7, found in Caldanaerobacter subterraneus subsp. tengcongensis (strain DSM 15242 / JCM 11007 / NBRC 100824 / MB4) (Thermoanaerobacter tengcongensis).